Consider the following 442-residue polypeptide: Glutamate synthase large subunit-like protein (442 aa).

The tract at residues 108–133 (LGRGATASGTSTTTGDGGMTDEERGH) is disordered. The span at 109–121 (GRGATASGTSTTT) shows a compositional bias: low complexity.

It belongs to the glutamate synthase family.

The sequence is that of Glutamate synthase large subunit-like protein (glxD) from Rhizobium meliloti (strain 1021) (Ensifer meliloti).